A 169-amino-acid chain; its full sequence is MSQAIIAAKAKFVEEFAEELKSAKSIVVINYLGLTVDQVTAFRAELRESNAKMKVVKNTYLRRAAAQAGLDDLAPVFVGPSAVIYTDDEDNVTAPARIAADYAKKFDVVEIKGGALEGQVATKEQVEELAAIPGREGLLSMLLSVLQAPVRNFAYVVKAVAESKEESAE.

It belongs to the universal ribosomal protein uL10 family. In terms of assembly, part of the ribosomal stalk of the 50S ribosomal subunit. The N-terminus interacts with L11 and the large rRNA to form the base of the stalk. The C-terminus forms an elongated spine to which L12 dimers bind in a sequential fashion forming a multimeric L10(L12)X complex.

Functionally, forms part of the ribosomal stalk, playing a central role in the interaction of the ribosome with GTP-bound translation factors. This Lactobacillus delbrueckii subsp. bulgaricus (strain ATCC 11842 / DSM 20081 / BCRC 10696 / JCM 1002 / NBRC 13953 / NCIMB 11778 / NCTC 12712 / WDCM 00102 / Lb 14) protein is Large ribosomal subunit protein uL10.